The chain runs to 882 residues: Alanine--tRNA ligase (882 aa).

The Zn(2+) site is built by His568, His572, Cys670, and His674.

The protein belongs to the class-II aminoacyl-tRNA synthetase family. Zn(2+) serves as cofactor.

The protein resides in the cytoplasm. The catalysed reaction is tRNA(Ala) + L-alanine + ATP = L-alanyl-tRNA(Ala) + AMP + diphosphate. In terms of biological role, catalyzes the attachment of alanine to tRNA(Ala) in a two-step reaction: alanine is first activated by ATP to form Ala-AMP and then transferred to the acceptor end of tRNA(Ala). Also edits incorrectly charged Ser-tRNA(Ala) and Gly-tRNA(Ala) via its editing domain. This Lactobacillus johnsonii (strain CNCM I-12250 / La1 / NCC 533) protein is Alanine--tRNA ligase.